We begin with the raw amino-acid sequence, 139 residues long: Large-conductance mechanosensitive channel (139 aa).

The next 2 helical transmembrane spans lie at 14–34 (VVDMAVGIIIGAAFGAIVKSL) and 86–106 (GLFINAVVSFTIVAFAVFLLI).

It belongs to the MscL family. In terms of assembly, homopentamer.

It localises to the cell inner membrane. Channel that opens in response to stretch forces in the membrane lipid bilayer. May participate in the regulation of osmotic pressure changes within the cell. The sequence is that of Large-conductance mechanosensitive channel from Methylobacillus flagellatus (strain ATCC 51484 / DSM 6875 / VKM B-1610 / KT).